Here is a 39-residue protein sequence, read N- to C-terminus: Potassium channel toxin alpha-KTx 2.9 (39 aa).

Intrachain disulfides connect Cys7/Cys29, Cys13/Cys34, and Cys17/Cys36. Residue Asn39 is modified to Asparagine amide.

The protein belongs to the short scorpion toxin superfamily. Potassium channel inhibitor family. Alpha-KTx 02 subfamily. In terms of tissue distribution, expressed by the venom gland.

The protein resides in the secreted. Blocks Kv1.3/KCNA3 voltage-gated potassium channels of human T-lymphocytes (Kd=0.25 nM). This chain is Potassium channel toxin alpha-KTx 2.9, found in Centruroides elegans (Bark scorpion).